Consider the following 321-residue polypeptide: Polygalacturonan/rhamnogalacturonan transport system permease protein YteP (321 aa).

An ABC transmembrane type-1 domain is found at 1–144 (MKTAEAQAPA…YIPHFMSWVI (144 aa)). 3 helical membrane passes run 21–41 (RKRL…ILPG), 63–83 (YQPF…FIRL), and 123–143 (IALF…MSWV).

Belongs to the binding-protein-dependent transport system permease family. As to quaternary structure, the complex is probably composed of two ATP-binding proteins (MsmX), two transmembrane proteins (YtcP and YteP) and a solute-binding protein (YtcQ).

It localises to the cell membrane. Functionally, involved in pectin degradation. Part of the ABC transporter complex YtcQP-YteP involved in the uptake of polygalacturonan and rhamnogalacturonan type I. Responsible for the translocation of the substrate across the membrane. This chain is Polygalacturonan/rhamnogalacturonan transport system permease protein YteP (yteP), found in Bacillus subtilis (strain 168).